The chain runs to 1738 residues: Sodium leak channel NALCN (1738 aa).

The Cytoplasmic segment spans residues 1–36; the sequence is MLKRKQSSRVEAQPVTDFGPDESLSDNADILWINKP. A helical transmembrane segment spans residues 37–57; the sequence is WVHSLLRICAIISVISVCMNT. The Extracellular segment spans residues 58-65; it reads PMTFEHYP. Residues 66-90 traverse the membrane as a helical segment; the sequence is PLQYVTFTLDTLLMFLYTAEMIAKM. Topologically, residues 91–106 are cytoplasmic; sequence HIRGIVKGDSSYVKDR. The chain crosses the membrane as a helical span at residues 107–129; the sequence is WCVFDGFMVFCLWVSLVLQVFEI. Topologically, residues 130–137 are extracellular; sequence ADIVDQMS. Residues 138 to 158 form a helical; Voltage-sensor membrane-spanning segment; that stretch reads PWGMLRIPRPLIMIRAFRIYF. The Cytoplasmic segment spans residues 159-173; it reads RFELPRTRITNILKR. The helical transmembrane segment at 174–199 threads the bilayer; that stretch reads SGEQIWSVSIFLLFFLLLYGILGVQM. The Extracellular portion of the chain corresponds to 200–269; the sequence is FGTFTYHCVV…YSGFNEIGTS (70 aa). 2 disulfides stabilise this stretch: Cys207–Cys239 and Cys229–Cys245. Residues Asn210 and Asn216 are each glycosylated (N-linked (GlcNAc...) asparagine). Residues 270–289 constitute an intramembrane region (pore-forming); sequence IFTVYEASSQEGWVFLMYRA. Over 290–294 the chain is Extracellular; it reads IDSFP. Residues 295 to 322 traverse the membrane as a helical segment; the sequence is RWRSYFYFITLIFFLAWLVKNVFIAVII. The Cytoplasmic portion of the chain corresponds to 323-382; that stretch reads ETFAEIRVQFQQMWGTRSSTTSTATTQMFHEDAAGGWQLVAVDVNKPQGRAPACLQKMMR. The chain crosses the membrane as a helical span at residues 383–403; the sequence is SSVFHMFILSMVTVDVIVAAS. Residues 404-416 lie on the Extracellular side of the membrane; sequence NYYKGENFRRQYD. A helical transmembrane segment spans residues 417-439; the sequence is EFYLAEVAFTVLFDLEALLKIWC. Topologically, residues 440–447 are cytoplasmic; that stretch reads LGFTGYIS. Residues 448–468 form a helical membrane-spanning segment; it reads SSLHKFELLLVIGTTLHVYPD. Topologically, residues 469–472 are extracellular; the sequence is LYHS. The chain crosses the membrane as a helical; Voltage-sensor span at residues 473–492; sequence QFTYFQVLRVVRLIKISPAL. The Cytoplasmic portion of the chain corresponds to 493–502; the sequence is EDFVYKIFGP. A helical membrane pass occupies residues 503-530; sequence GKKLGSLVVFTASLLIVMSAISLQMFCF. Residues 531 to 543 are Extracellular-facing; that stretch reads VEELDRFTTFPRA. The segment at residues 544–563 is an intramembrane region (pore-forming); that stretch reads FMSMFQILTQEGWVDVMDQT. At 564–578 the chain is on the extracellular side; that stretch reads LNAVGHMWAPLVAIY. Residues 579-599 traverse the membrane as a helical segment; it reads FILYHLFATLILLSLFVAVIL. The Cytoplasmic segment spans residues 600-886; it reads DNLELDEDLK…QLYDLLGLVT (287 aa). A disordered region spans residues 762–785; sequence QERRSLRHGSNSQRISRGKSLETL. Positions 795 to 830 form a coiled coil; that stretch reads YRNAQREDSEIKMIQEKKEQAEMKRKVQEEELRENH. Residues 887-906 traverse the membrane as a helical segment; it reads YLDWVMITVTICSCISMMFE. At 907 to 915 the chain is on the extracellular side; it reads SPFRRVMHA. Residues 916-939 form a helical membrane-spanning segment; that stretch reads PTLQIAEYVFVIFMSIELNLKIMA. The Cytoplasmic segment spans residues 940 to 947; sequence DGLFFTPT. Residues 948 to 972 form a helical membrane-spanning segment; the sequence is AVIRDFGGVMDIFIYLVSLIFLCWM. Residues 973–980 are Extracellular-facing; the sequence is PQNVPAES. The helical; Voltage-sensor transmembrane segment at 981 to 1003 threads the bilayer; it reads GAQLLMVLRCLRPLRIFKLVPQM. Residues 1004 to 1015 are Cytoplasmic-facing; the sequence is RKVVRELFSGFK. Residues 1016 to 1039 form a helical membrane-spanning segment; sequence EIFLVSILLLTLMLVFASFGVQLF. Residues 1040 to 1104 are Extracellular-facing; sequence AGKLAKCNDP…NFNFDNVGNA (65 aa). A disulfide bridge connects residues Cys1046 and Cys1057. Asn1064 carries an N-linked (GlcNAc...) asparagine glycan. An intramembrane region (pore-forming) is located at residues 1105–1124; sequence MLALFEVLSLKGWVEVRDVI. At 1125–1129 the chain is on the extracellular side; it reads IHRVG. The helical transmembrane segment at 1130–1159 threads the bilayer; the sequence is PIHGIYIHVFVFLGCMIGLTLFVGVVIANF. Over 1160–1210 the chain is Cytoplasmic; the sequence is NENKGTALLTVDQRRWEDLKSRLKIAQPLHLPPRPDNDGFRAKMYDITQHP. A helical membrane pass occupies residues 1211-1227; that stretch reads FFKRTIALLVLAQSVLL. The Extracellular segment spans residues 1228-1236; that stretch reads SVKWDVDDP. Residues 1237 to 1260 form a helical membrane-spanning segment; the sequence is VTVPLATMSVVFTFIFVLEVTMKI. Residues 1261–1271 lie on the Cytoplasmic side of the membrane; it reads IAMSPAGFWQS. A helical transmembrane segment spans residues 1272–1293; it reads RRNRYDLLVTSLGVVWVVLHFA. The Extracellular segment spans residues 1294–1296; sequence LLN. The chain crosses the membrane as a helical; Voltage-sensor span at residues 1297-1318; sequence AYTYMMGACVIVFRFFSICGKH. Over 1319-1331 the chain is Cytoplasmic; sequence VTLKMLLLTVVVS. Residues 1332 to 1357 traverse the membrane as a helical segment; sequence MYKSFFIIVGMFLLLLCYAFAGVVLF. Topologically, residues 1358 to 1378 are extracellular; the sequence is GTVKYGENINRHANFSSAGKA. An intramembrane region (pore-forming) is located at residues 1379-1398; the sequence is ITVLFRIVTGEDWNKIMHDC. Over 1399 to 1420 the chain is Extracellular; it reads MVQPPFCTPDEFTYWATDCGNY. Cys1405 and Cys1417 are oxidised to a cystine. A helical membrane pass occupies residues 1421–1447; the sequence is AGALMYFCSFYVIIAYIMLNLLVAIIV. Topologically, residues 1448–1738 are cytoplasmic; sequence ENFSLFYSTE…DESGDDLLDI (291 aa). The disordered stretch occupies residues 1602 to 1679; that stretch reads EQERSRFLNP…WRLPSAPKPI (78 aa). Positions 1613–1631 are enriched in polar residues; sequence SIETTQPSEDSNANSQDHS. Residues 1633–1648 are compositionally biased toward low complexity; sequence QPETSSQQQLLSPTLS.

It belongs to the NALCN family. In terms of assembly, found in a complex with NALCN, UNC79, UNC80 and NACL1; these auxiliary subunits are indispensable for the function of the NALCN channel. Interacts with UNC80; required for the NALCN activation/inhibition by GPCRs in neurons. Found in a complex with NALCN, UNC79 and UNC80; UNC80 bridges NALCN to UNC79. Interacts with CHRM3. Post-translationally, phosphorylated on tyrosine residues. As to expression, widely expressed in the brain and spinal cord neurons. Expressed also in pancreatic islet cells.

Its subcellular location is the cell membrane. It catalyses the reaction Na(+)(in) = Na(+)(out). With respect to regulation, inhibited by low micromolar concentrations of Gd(3+) and high micromolar concentrations of verapamil. Insensitive to tetrodotoxin (TTX) and potentiated by low external Ca(2+) concentration. In terms of biological role, voltage-gated ion channel responsible for the resting Na(+) permeability that controls neuronal excitability. NALCN channel functions as a multi-protein complex, which consists at least of NALCN, NALF1, UNC79 and UNC80. NALCN is the voltage-sensing, pore-forming subunit of the NALCN channel complex. NALCN channel complex is constitutively active and conducts monovalent cations but is blocked by physiological concentrations of extracellular divalent cations. In addition to its role in regulating neuronal excitability, is required for normal respiratory rhythm, systemic osmoregulation by controlling the serum sodium concentration and in the regulation of the intestinal pace-making activity in the interstitial cells of Cajal. Plays a critical role in both maintenance of spontaneous firing of substantia nigra pars reticulata (SNr) neurons and physiological modulation of SNr neuron excitability. NALCN channel is also activated by neuropeptides such as neurotensin and substance P (SP) through a SRC family kinases-dependent pathway. In addition, NALCN activity is enhanced/modulated by several GPCRs, such as CHRM3. The chain is Sodium leak channel NALCN (Nalcn) from Mus musculus (Mouse).